A 532-amino-acid polypeptide reads, in one-letter code: FRIGIDA-like protein 4a (532 aa).

The interval K406 to A432 is disordered.

Belongs to the Frigida family. As to expression, expressed in leaves, shoot apex, flowers and during seed development.

The protein is FRIGIDA-like protein 4a (FRL4A) of Arabidopsis thaliana (Mouse-ear cress).